The sequence spans 1063 residues: Lysine-specific demethylase phf2 (1063 aa).

A PHD-type zinc finger spans residues 5 to 56 (PVYCICRLPYDVTQFMIECDACKDWFHGSCVGVDEDEAPDIDIYHCPNCEKT). The 157-residue stretch at 197 to 353 (FSDARMANIV…MQMRAYEVEK (157 aa)) folds into the JmjC domain. Thr246 contacts 2-oxoglutarate. His249 and Glu251 together coordinate Fe cation. Residues Tyr259 and Lys266 each coordinate 2-oxoglutarate. Asn321 serves as a coordination point for Fe cation. Disordered stretches follow at residues 448 to 546 (VSDS…LAAL), 704 to 761 (NIKE…SAGI), 773 to 864 (GIDY…DMFD), and 879 to 1045 (YVYP…MATA). Residues 460–477 (SEPSNSKPPAEEPPSALS) show a composition bias toward low complexity. 2 stretches are compositionally biased toward basic and acidic residues: residues 513–540 (PPKE…EKKP) and 723–745 (KSPD…DVKG). Basic residues predominate over residues 746–755 (RNSKVSKKKG). Positions 776 to 791 (YSNNSQPPASPSTQEA) are enriched in polar residues. Over residues 813–833 (SNSQAKNNSHSSAASKKPSGA) the composition is skewed to low complexity. The span at 842–852 (RPAKRLPKKTQ) shows a compositional bias: basic residues. Over residues 920 to 929 (RQERPAREGA) the composition is skewed to basic and acidic residues. Residues 953–964 (IKKKKKSAKKKP) are compositionally biased toward basic residues. Basic and acidic residues predominate over residues 965-975 (IVAEESHKLSH). 2 stretches are compositionally biased toward low complexity: residues 976–988 (DSSS…DSES) and 1021–1031 (SSSSSSQNASS). Phosphoserine; by PKA is present on Ser1021.

It belongs to the JHDM1 histone demethylase family. JHDM1D subfamily.

It is found in the nucleus. The protein localises to the nucleolus. Its subcellular location is the chromosome. It localises to the centromere. The protein resides in the kinetochore. Functionally, lysine demethylase that demethylates both histones and non-histone proteins. Mediates demethylation of dimethylated 'Lys-9' of histone H3 (H3K9me2). Recruited to trimethylated 'Lys-4' of histone H3 (H3K4me3) at rDNA promoters and promotes expression of rDNA. This chain is Lysine-specific demethylase phf2 (phf2), found in Danio rerio (Zebrafish).